The primary structure comprises 75 residues: Putative defensin-like protein 271 (75 aa).

Positions 1 to 23 (MTSMKLHIVALCIIVSFLVNVQS) are cleaved as a signal peptide. 4 cysteine pairs are disulfide-bonded: cysteine 33–cysteine 72, cysteine 39–cysteine 61, cysteine 45–cysteine 70, and cysteine 49–cysteine 71.

This sequence belongs to the DEFL family.

It localises to the secreted. This chain is Putative defensin-like protein 271, found in Arabidopsis thaliana (Mouse-ear cress).